The following is a 616-amino-acid chain: Mitochondrial Rho GTPase 2 (616 aa).

Over 1 to 590 (MKRDVRILLL…HDTELSTASF (590 aa)) the chain is Cytoplasmic. Positions 2-168 (KRDVRILLLG…FYYAQKAVLH (167 aa)) constitute a Miro 1 domain. Residues glycine 16, lysine 17, threonine 18, and serine 19 each coordinate GTP. Mg(2+) is bound at residue threonine 18. Aspartate 57 contacts Mg(2+). GTP is bound by residues serine 59, asparagine 118, lysine 119, aspartate 121, alanine 149, and lysine 150. EF-hand domains follow at residues 184 to 219 (QCKK…CFGN) and 304 to 339 (FGYQ…FPYT). Positions 199, 201, 208, 317, 319, 321, and 328 each coordinate Ca(2+). Residues 416–577 (RNVFLCRVIG…YSKLATAAAF (162 aa)) form the Miro 2 domain. The GTP site is built by glycine 428, glycine 430, lysine 431, serine 432, and alanine 433. Residue serine 432 coordinates Mg(2+). Glutamate 474 serves as a coordination point for Mg(2+). Lysine 528, aspartate 530, and cysteine 559 together coordinate GTP. Residues 591 to 613 (WLRVALGATVAAVVGFTLYKALL) traverse the membrane as a helical; Anchor for type IV membrane protein segment. Over 614–616 (RSK) the chain is Mitochondrial intermembrane.

Belongs to the mitochondrial Rho GTPase family. Homodimer.

The protein localises to the mitochondrion outer membrane. The enzyme catalyses GTP + H2O = GDP + phosphate + H(+). The catalysed reaction is ATP + H2O = ADP + phosphate + H(+). It catalyses the reaction UTP + H2O = UDP + phosphate + H(+). Its function is as follows. Atypical mitochondrial nucleoside-triphosphatase (NTPase) involved in mitochondrial trafficking. Probably involved in control of anterograde transport of mitochondria and their subcellular distribution. Can hydrolyze GTP, ATP and UTP. The protein is Mitochondrial Rho GTPase 2 (rhot2) of Xenopus tropicalis (Western clawed frog).